The following is a 500-amino-acid chain: AAA-ATPase At3g28580 (500 aa).

The chain crosses the membrane as a helical span at residues 7-29 (LWTNTGSALATLMFVYTIFKQFF). Positions 174–193 (NRERKLYSNTPGQSHGNNSK) are disordered. Polar residues predominate over residues 180-193 (YSNTPGQSHGNNSK). 247–254 (GPPGTGKS) contacts ATP. Residues 462 to 500 (KEEAKKKVEEEEEEKQRKKEKVKEIEAEKEKKKKIEEEN) are disordered.

It belongs to the AAA ATPase family. BCS1 subfamily. Requires Mg(2+) as cofactor.

The protein resides in the membrane. It catalyses the reaction ATP + H2O = ADP + phosphate + H(+). The sequence is that of AAA-ATPase At3g28580 from Arabidopsis thaliana (Mouse-ear cress).